The chain runs to 393 residues: Elongation factor Tu (393 aa).

A tr-type G domain is found at 10-203 (KPHVNIGTIG…AVDNYIPTPV (194 aa)). The tract at residues 19–26 (GHVDHGKT) is G1. 19 to 26 (GHVDHGKT) lines the GTP pocket. Position 26 (Thr26) interacts with Mg(2+). A G2 region spans residues 60-64 (GITIS). A G3 region spans residues 81-84 (DCPG). Residues 81–85 (DCPGH) and 136–139 (NKVD) each bind GTP. The tract at residues 136 to 139 (NKVD) is G4. Residues 173-175 (SAL) are G5.

It belongs to the TRAFAC class translation factor GTPase superfamily. Classic translation factor GTPase family. EF-Tu/EF-1A subfamily. As to quaternary structure, monomer.

It is found in the cytoplasm. The enzyme catalyses GTP + H2O = GDP + phosphate + H(+). Its function is as follows. GTP hydrolase that promotes the GTP-dependent binding of aminoacyl-tRNA to the A-site of ribosomes during protein biosynthesis. This chain is Elongation factor Tu, found in Chloroherpeton thalassium (strain ATCC 35110 / GB-78).